A 73-amino-acid polypeptide reads, in one-letter code: Alpha-amylase inhibitor Paim-1 (73 aa).

Cystine bridges form between Cys-8–Cys-24 and Cys-42–Cys-70.

Its function is as follows. Inhibits mammalian alpha-amylases specifically but has no action on plant and microbial alpha-amylases. This is Alpha-amylase inhibitor Paim-1 from Streptomyces olivaceoviridis (Streptomyces corchorusii).